The sequence spans 313 residues: Ribose-phosphate pyrophosphokinase (313 aa).

ATP contacts are provided by residues 37-39 and 96-97; these read DGE and RQ. Mg(2+)-binding residues include H131 and D170. K193 is a catalytic residue. D-ribose 5-phosphate contacts are provided by residues R195, D219, and 223–227; that span reads DTAGT.

Belongs to the ribose-phosphate pyrophosphokinase family. Class I subfamily. As to quaternary structure, homohexamer. Requires Mg(2+) as cofactor.

It localises to the cytoplasm. It carries out the reaction D-ribose 5-phosphate + ATP = 5-phospho-alpha-D-ribose 1-diphosphate + AMP + H(+). The protein operates within metabolic intermediate biosynthesis; 5-phospho-alpha-D-ribose 1-diphosphate biosynthesis; 5-phospho-alpha-D-ribose 1-diphosphate from D-ribose 5-phosphate (route I): step 1/1. In terms of biological role, involved in the biosynthesis of the central metabolite phospho-alpha-D-ribosyl-1-pyrophosphate (PRPP) via the transfer of pyrophosphoryl group from ATP to 1-hydroxyl of ribose-5-phosphate (Rib-5-P). The polypeptide is Ribose-phosphate pyrophosphokinase (Pseudomonas putida (strain ATCC 47054 / DSM 6125 / CFBP 8728 / NCIMB 11950 / KT2440)).